The sequence spans 409 residues: Lissencephaly-1 homolog (409 aa).

The 33-residue stretch at 7–39 (QREELNQAIADYLGTNGYADSLEAFRKEADLST) folds into the LisH domain. A coiled-coil region spans residues 54-81 (TSVIRLQKKVMELEAKLTEAEKEVIEGA). WD repeat units lie at residues 104–145 (GHRA…RSLK), 146–185 (GHTDSVQDVAFDAQGKLLVSCSADLSIKLWDFQQSYACVK), 189–228 (GHDHNVSSVAFVPAGDYVLSASRDRTIKMWEVATGYCVKT), 231–270 (GHREWVRMVRVHIEGSLFATCSNDHTIRVWLTNSKDCKVE), 273–332 (DHEH…CLLT), 335–374 (GHDNWVRGLAFHPGGKYLVSASDDKTIRVWDLRNKRCMKT), and 377–409 (AHQHFCTSIDFHKAHPYVISGSVDQTVKVWECR).

The protein belongs to the WD repeat LIS1/nudF family.

The protein localises to the cytoplasm. The protein resides in the cytoskeleton. It is found in the microtubule organizing center. Its subcellular location is the centrosome. Functionally, positively regulates the activity of the minus-end directed microtubule motor protein dynein. May enhance dynein-mediated microtubule sliding by targeting dynein to the microtubule plus end. Required for several dynein- and microtubule-dependent processes. This chain is Lissencephaly-1 homolog, found in Drosophila willistoni (Fruit fly).